The chain runs to 439 residues: Phosphomethylpyrimidine synthase (439 aa).

Substrate-binding positions include N67, M96, Y126, H165, 187–189 (SRG), 228–231 (DSLR), and E267. H271 lines the Zn(2+) pocket. A substrate-binding site is contributed by Y294. Residue H335 coordinates Zn(2+). Residues C411, C414, and C418 each coordinate [4Fe-4S] cluster.

It belongs to the ThiC family. [4Fe-4S] cluster serves as cofactor.

It carries out the reaction 5-amino-1-(5-phospho-beta-D-ribosyl)imidazole + S-adenosyl-L-methionine = 4-amino-2-methyl-5-(phosphooxymethyl)pyrimidine + CO + 5'-deoxyadenosine + formate + L-methionine + 3 H(+). It participates in cofactor biosynthesis; thiamine diphosphate biosynthesis. Functionally, catalyzes the synthesis of the hydroxymethylpyrimidine phosphate (HMP-P) moiety of thiamine from aminoimidazole ribotide (AIR) in a radical S-adenosyl-L-methionine (SAM)-dependent reaction. The chain is Phosphomethylpyrimidine synthase from Ignicoccus hospitalis (strain KIN4/I / DSM 18386 / JCM 14125).